A 598-amino-acid polypeptide reads, in one-letter code: Arginine--tRNA ligase (598 aa).

The 'HIGH' region signature appears at 131–141; the sequence is ANPTGPMHVGH. Residues 288 to 309 form a disordered region; it reads KLPPPKSKKGQPPPQAQPDEEG.

This sequence belongs to the class-I aminoacyl-tRNA synthetase family. As to quaternary structure, monomer.

The protein resides in the cytoplasm. It carries out the reaction tRNA(Arg) + L-arginine + ATP = L-arginyl-tRNA(Arg) + AMP + diphosphate. This chain is Arginine--tRNA ligase, found in Anaeromyxobacter dehalogenans (strain 2CP-C).